Here is a 704-residue protein sequence, read N- to C-terminus: Elongation factor G (704 aa).

The region spanning 10–286 is the tr-type G domain; sequence KKVRNIGIMA…AVIDFLPNPM (277 aa). GTP-binding positions include 19–26, 83–87, and 137–140; these read AHIDAGKT, DTPGH, and NKMD.

Belongs to the TRAFAC class translation factor GTPase superfamily. Classic translation factor GTPase family. EF-G/EF-2 subfamily.

It localises to the cytoplasm. Catalyzes the GTP-dependent ribosomal translocation step during translation elongation. During this step, the ribosome changes from the pre-translocational (PRE) to the post-translocational (POST) state as the newly formed A-site-bound peptidyl-tRNA and P-site-bound deacylated tRNA move to the P and E sites, respectively. Catalyzes the coordinated movement of the two tRNA molecules, the mRNA and conformational changes in the ribosome. The chain is Elongation factor G from Corynebacterium jeikeium (strain K411).